The primary structure comprises 133 residues: Phosphoribosyl-AMP cyclohydrolase (133 aa).

Asp-77 is a binding site for Mg(2+). A Zn(2+)-binding site is contributed by Cys-78. Asp-79 and Asp-81 together coordinate Mg(2+). Zn(2+) contacts are provided by Cys-95 and Cys-102.

It belongs to the PRA-CH family. In terms of assembly, homodimer. Requires Mg(2+) as cofactor. Zn(2+) is required as a cofactor.

It is found in the cytoplasm. The catalysed reaction is 1-(5-phospho-beta-D-ribosyl)-5'-AMP + H2O = 1-(5-phospho-beta-D-ribosyl)-5-[(5-phospho-beta-D-ribosylamino)methylideneamino]imidazole-4-carboxamide. It functions in the pathway amino-acid biosynthesis; L-histidine biosynthesis; L-histidine from 5-phospho-alpha-D-ribose 1-diphosphate: step 3/9. In terms of biological role, catalyzes the hydrolysis of the adenine ring of phosphoribosyl-AMP. The protein is Phosphoribosyl-AMP cyclohydrolase of Azotobacter vinelandii (strain DJ / ATCC BAA-1303).